A 703-amino-acid chain; its full sequence is Meiotic coiled-coil protein 2 (703 aa).

2 stretches are compositionally biased toward polar residues: residues 1-19 (MQSI…SISE) and 245-258 (TNVR…STPL). Disordered regions lie at residues 1 to 29 (MQSI…SELN), 245 to 265 (TNVR…DVDL), and 284 to 309 (ASTN…RSSS). The 356-residue stretch at 331–686 (NPSVIPESTS…KVAYLVEKWN (356 aa)) folds into the PUM-HD domain. Pumilio repeat units lie at residues 361–396 (NVII…NIVD), 397–432 (SIIS…QMGS), 433–468 (AMLG…AMMD), 469–504 (ELFL…NVMN), 509–544 (ALRG…ECIE), 545–580 (EIIF…RVID), 581–616 (ALLN…LYLK), and 625–660 (RTRQ…LVIT).

This chain is Meiotic coiled-coil protein 2 (mcp2), found in Schizosaccharomyces pombe (strain 972 / ATCC 24843) (Fission yeast).